The following is a 124-amino-acid chain: Small ribosomal subunit protein uS12 (124 aa).

3-methylthioaspartic acid is present on Asp-89.

It belongs to the universal ribosomal protein uS12 family. As to quaternary structure, part of the 30S ribosomal subunit. Contacts proteins S8 and S17. May interact with IF1 in the 30S initiation complex.

Functionally, with S4 and S5 plays an important role in translational accuracy. Interacts with and stabilizes bases of the 16S rRNA that are involved in tRNA selection in the A site and with the mRNA backbone. Located at the interface of the 30S and 50S subunits, it traverses the body of the 30S subunit contacting proteins on the other side and probably holding the rRNA structure together. The combined cluster of proteins S8, S12 and S17 appears to hold together the shoulder and platform of the 30S subunit. This chain is Small ribosomal subunit protein uS12, found in Shewanella frigidimarina (strain NCIMB 400).